Here is a 769-residue protein sequence, read N- to C-terminus: Post-GPI attachment to proteins factor 6 (769 aa).

Residues 1-33 form the signal peptide; sequence MGRVGAGGTAREAATGSLLLLLLLLARPPPAAA. The Extracellular portion of the chain corresponds to 34–543; it reads SNSKESEAGL…STAQTVAQQR (510 aa). Residues N138 and N411 are each glycosylated (N-linked (GlcNAc...) asparagine). The 37-residue stretch at 495–531 folds into the EGF-like domain; that stretch reads PCLNDCGPYGQCLLLRRYGYVYAGCSCKAGWRGWSCT. 3 cysteine pairs are disulfide-bonded: C496-C506, C500-C519, and C521-C530. Residues 544–564 form a helical membrane-spanning segment; the sequence is AAALLLTLSNLMFLAPIAISL. The Cytoplasmic segment spans residues 565 to 567; that stretch reads HRS. A helical membrane pass occupies residues 568–588; the sequence is FLVEASVYFYTMFFSTFYHAC. The Extracellular portion of the chain corresponds to 589 to 603; sequence DQPGEAVLCILSYDT. A helical transmembrane segment spans residues 604–624; that stretch reads LQYCDFLGSGASTWVTILCMA. The Cytoplasmic portion of the chain corresponds to 625-627; sequence RLK. Residues 628-648 form a helical membrane-spanning segment; the sequence is TILKQVLLVLGTLVIAMSLQM. The Extracellular segment spans residues 649 to 651; sequence DRR. Residues 652–672 traverse the membrane as a helical segment; it reads GIWNLMGPCVFAFVIMASMWI. The Cytoplasmic portion of the chain corresponds to 673–688; it reads YRCGHRGQCYPTSWQR. Residues 689-709 traverse the membrane as a helical segment; sequence WVFYLLPGISMASVGIAMYTS. Topologically, residues 710-715 are extracellular; sequence MMTSDN. A helical transmembrane segment spans residues 716 to 736; it reads YYYTHSIWHILLAGSAAFLLP. The Cytoplasmic portion of the chain corresponds to 737-769; the sequence is PREEKAGSWACLQKFPCHYQICRNDRDELYTVT.

The protein belongs to the TMEM8 family. Glycosylated.

It is found in the cell membrane. Its subcellular location is the lysosome membrane. It carries out the reaction a 1,2-diacyl-sn-glycero-3-phosphocholine + H2O = a 1-acyl-sn-glycero-3-phosphocholine + a fatty acid + H(+). Involved in the lipid remodeling steps of GPI-anchor maturation. Lipid remodeling steps consist in the generation of 2 saturated fatty chains at the sn-2 position of GPI-anchor proteins (GPI-AP). Has phospholipase A2 activity that removes an acyl-chain at the sn-2 position of GPI-anchors during the remodeling of GPI. Required for the shedding of the GPI-AP CRIPTO, but not CFC1, at the cell surface. Shedding of CRIPTO modulates Nodal signaling by allowing soluble CRIPTO to act as a Nodal coreceptor on other cells. Also indirectly involved in the translocation of RAC1 from the cytosol to the plasma membrane by maintaining the steady state amount of CAV1-enriched plasma membrane subdomains, stabilizing RAC1 at the plasma membrane. This Mus musculus (Mouse) protein is Post-GPI attachment to proteins factor 6.